Consider the following 243-residue polypeptide: Protein unc-119 homolog B (243 aa).

Polar residues predominate over residues 1-21; that stretch reads MNSQSSRNETAATAVNGSDSA. Residues 1-49 are disordered; it reads MNSQSSRNETAATAVNGSDSAAASRDHKSGGGVLKRLKSRRNQVDRRPV. Tyr-134 is a binding site for tetradecanoate.

The protein belongs to the PDE6D/unc-119 family. In terms of tissue distribution, detected in embryo. Detected in larvae four days after fertilization, in retina and neural tissues (at protein level). Detected in embryos at the sphere stage, during gastrulation, somitogenesis and in swimming larvae, both within and outside of the developing nervous system. Detected in adults.

The protein localises to the cell projection. Its subcellular location is the cilium. Myristoyl-binding protein that acts as a cargo adapter: specifically binds the myristoyl moiety of a subset of N-terminally myristoylated proteins and is required for their localization. Plays a key role in localization of proteins to the primary cilium membrane. The chain is Protein unc-119 homolog B (unc119b) from Danio rerio (Zebrafish).